The following is a 998-amino-acid chain: Collagen alpha-1(I) chain (998 aa).

Positions 1-998 are disordered; the sequence is GGVSVPGPMG…PGPPGPPGPP (998 aa). 9 positions are modified to 4-hydroxyproline: proline 18, proline 21, proline 24, proline 33, proline 48, proline 63, proline 69, proline 78, and proline 84. Over residues 26 to 39 the composition is skewed to low complexity; it reads PQGFQGPPGSSGPM. Basic and acidic residues predominate over residues 51-65; it reads NGDDGEAGKPGRPGE. Lysine 87 is modified (5-hydroxylysine; alternate). Residue lysine 87 is glycosylated (O-linked (Gal...) hydroxylysine; alternate). Position 93 is a phosphoserine (serine 93). Positions 101–115 are enriched in low complexity; the sequence is DAGPAGPKQMGPRGL. 4-hydroxyproline occurs at positions 116, 122, 143, 152, 155, 182, 185, 197, 203, 212, 218, 221, and 236. Low complexity predominate over residues 122–140; the sequence is PGASGPAGARGNDGATGAA. The span at 142-154 shows a compositional bias: pro residues; the sequence is PPGPTGPAGPPGF. Residues 188–238 are compositionally biased toward low complexity; sequence AGAAGPAGNPGADGQPGAKGANGAPGIAGAPGFPGARGPSGPQGPSGAPGP. Lysine 239 carries the post-translational modification 5-hydroxylysine. 4-hydroxyproline occurs at positions 245, 248, 260, 269, 284, 290, 299, and 305. Residues 294 to 303 show a composition bias toward gly residues; sequence GERGGPGSRG. Position 314 is a 5-hydroxylysine (lysine 314). Proline 323, proline 332, proline 338, proline 344, proline 353, proline 356, proline 365, proline 374, proline 380, proline 392, proline 401, proline 410, proline 413, proline 431, proline 449, proline 455, proline 461, proline 467, proline 473, proline 479, proline 491, proline 500, proline 511, proline 523, proline 526, proline 532, proline 538, and proline 547 each carry 4-hydroxyproline. A compositionally biased stretch (low complexity) spans 347-401; that stretch reads KGLTGSPGSPGPDGKTGPPGPAGQDGRPGPAGPPGARGQAGVMGFPGPKGAAGEP. Positions 443–470 are enriched in low complexity; the sequence is QGPAGSPGFQGLPGPAGPPGEAGKPGEQ. Low complexity predominate over residues 513 to 535; it reads NDGAKGDAGAPGAPGSQGAPGLQ. Lysine 559 bears the 5-hydroxylysine mark. 2 positions are modified to 4-hydroxyproline: proline 565 and proline 580. Positions 592-606 are enriched in low complexity; the sequence is TGPSGPAGPTGARGA. Serine 595 is modified (phosphoserine). Residues proline 607, proline 613, proline 616, proline 625, proline 631, proline 649, proline 658, and proline 667 each carry the 4-hydroxyproline modification. The segment covering 619–646 has biased composition (low complexity); sequence AGFAGPPGADGQPGAKGEPGDAGAKGDA. The segment covering 648-660 has biased composition (pro residues); it reads PPGPAGPTGPPGP. Lysine 670 carries the 5-hydroxylysine modification. Over residues 675–691 the composition is skewed to low complexity; the sequence is SAGPPGATGFPGAAGRV. A 4-hydroxyproline mark is found at proline 679 and proline 685. At proline 693 the chain carries 3-hydroxyproline. Residues proline 694, proline 703, proline 706, proline 727, proline 736, proline 744, proline 753, proline 771, proline 780, proline 783, proline 789, proline 804, proline 810, proline 816, proline 825, and proline 831 each carry the 4-hydroxyproline modification. Residues 720 to 729 are compositionally biased toward low complexity; the sequence is ETGPAGRPGE. The segment covering 741-762 has biased composition (low complexity); sequence KGSPGADGPAGAPGTPGPQGIA. Pro residues predominate over residues 803–813; sequence PPGPMGPPGLA. The span at 815–830 shows a compositional bias: low complexity; it reads PPGEAGREGSPGAEGS. Lysine 840 carries the 5-hydroxylysine modification. Pro residues predominate over residues 848 to 863; that stretch reads PGPPGAPGAPGAPGPV. A 4-hydroxyproline mark is found at proline 851, proline 854, and proline 857. Positions 884 to 898 are enriched in low complexity; that stretch reads AGPAGARGPAGPQGP. Basic and acidic residues predominate over residues 899 to 913; that stretch reads RGDKGETGEQGDRGI. Lysine 902 is modified (5-hydroxylysine). Lysine 914 carries the post-translational modification 5-hydroxylysine; alternate. O-linked (Gal...) hydroxylysine; alternate glycosylation occurs at lysine 914. 4-hydroxyproline occurs at positions 929, 932, 950, and 965. The segment covering 932–965 has biased composition (low complexity); the sequence is PGEQGPSGASGPAGPRGPPGSAGTPGKDGLNGLP. Proline 970 is subject to 3-hydroxyproline. Position 971 is a 4-hydroxyproline (proline 971). Over residues 983–998 the composition is skewed to pro residues; it reads VGPPGPPGPPGPPGPP. 3-hydroxyproline is present on proline 985. Proline 986 carries the 4-hydroxyproline modification. Residue proline 988 is modified to 3-hydroxyproline. A 4-hydroxyproline modification is found at proline 989. Proline 991 bears the 3-hydroxyproline mark. 4-hydroxyproline occurs at positions 992, 995, and 998.

It belongs to the fibrillar collagen family. In terms of assembly, trimers of one alpha 2(I) and two alpha 1(I) chains. Contains mostly 4-hydroxyproline. Proline residues at the third position of the tripeptide repeating unit (G-X-Y) are hydroxylated in some or all of the chains. Post-translationally, contains 3-hydroxyproline at a few sites. This modification occurs on the first proline residue in the sequence motif Gly-Pro-Hyp, where Hyp is 4-hydroxyproline. In terms of processing, lysine residues at the third position of the tripeptide repeating unit (G-X-Y) are 5-hydroxylated in some or all of the chains. O-glycosylated on hydroxylated lysine residues. The O-linked glycan consists of a Glc-Gal disaccharide. In terms of tissue distribution, expressed in bones.

It localises to the secreted. Its subcellular location is the extracellular space. The protein localises to the extracellular matrix. Functionally, type I collagen is a member of group I collagen (fibrillar forming collagen). The chain is Collagen alpha-1(I) chain from Glyptodon sp. (strain SLP-2019) (Giant armadillo).